A 171-amino-acid chain; its full sequence is Myosin regulatory light polypeptide 9 (171 aa).

Over residues 1-15 (MSSKRAKAKTTKKRP) the composition is skewed to basic residues. The disordered stretch occupies residues 1–21 (MSSKRAKAKTTKKRPQSATSN). An N-acetylserine modification is found at Ser2. Phosphothreonine; by MLCK, CIT and ROCK2 is present on Thr19. Ser20 is modified (phosphoserine; by CDC42BP, CIT, MLCK, PAK1, ROCK1, ROCK2, DAPK1, DAPK2 and ZIPK/DAPK3). 2 consecutive EF-hand domains span residues 29–64 (SQIQEFKEAFNMIDQNRDGFIDKEDLHDMLASLGKN) and 98–133 (DPEDVIRNAFACFDEEASGFIHEDHLRELLTTMGDR). Ca(2+) contacts are provided by Asp42, Asn44, Asp46, and Asp53.

As to quaternary structure, myosin is a hexamer of 2 heavy chains and 4 light chains: interacts with myosin heavy chain MYO19. Interacts with LUZP1; the interaction results in inhibition of phosphorylation of MYL9 by DAPK3. Post-translationally, phosphorylation increases the actin-activated myosin ATPase activity and thereby regulates the contractile activity. It is required to generate the driving force in the migration of the cells but not necessary for localization of myosin-2 at the leading edge. Phosphorylation is required for myotube formation. Phosphorylated by DAPK3; DAPK3-mediated phosphorylation is inhibited by LUZP1. As to expression, smooth muscle tissues and in some, but not all, nonmuscle cells.

It is found in the cytoplasm. Its subcellular location is the cytoskeleton. It localises to the cell cortex. Myosin regulatory subunit that plays an important role in regulation of both smooth muscle and nonmuscle cell contractile activity via its phosphorylation. Implicated in cytokinesis, receptor capping, and cell locomotion. In myoblasts, may regulate PIEZO1-dependent cortical actomyosin assembly involved in myotube formation. This is Myosin regulatory light polypeptide 9 (Myl9) from Rattus norvegicus (Rat).